We begin with the raw amino-acid sequence, 59 residues long: Crassipeptide cce9a (59 aa).

A propeptide spanning residues 1–30 is cleaved from the precursor; that stretch reads ADNHARVAGPRAVASGRYATEKAFLQMMTR.

In terms of processing, contains 3 disulfide bonds. In terms of tissue distribution, expressed by the venom duct.

It is found in the secreted. Crassispirid snail peptide that induces sleep-like symptoms in young mice (12 and 14 days) and hyperactivity in older mice (16 days), when intracranially injected. In Crassispira cerithina (Sea snail), this protein is Crassipeptide cce9a.